Here is a 617-residue protein sequence, read N- to C-terminus: Proline--tRNA ligase (617 aa).

This sequence belongs to the class-II aminoacyl-tRNA synthetase family. ProS type 1 subfamily. As to quaternary structure, homodimer.

The protein localises to the cytoplasm. The catalysed reaction is tRNA(Pro) + L-proline + ATP = L-prolyl-tRNA(Pro) + AMP + diphosphate. Catalyzes the attachment of proline to tRNA(Pro) in a two-step reaction: proline is first activated by ATP to form Pro-AMP and then transferred to the acceptor end of tRNA(Pro). As ProRS can inadvertently accommodate and process non-cognate amino acids such as alanine and cysteine, to avoid such errors it has two additional distinct editing activities against alanine. One activity is designated as 'pretransfer' editing and involves the tRNA(Pro)-independent hydrolysis of activated Ala-AMP. The other activity is designated 'posttransfer' editing and involves deacylation of mischarged Ala-tRNA(Pro). The misacylated Cys-tRNA(Pro) is not edited by ProRS. This is Proline--tRNA ligase from Streptococcus pneumoniae (strain ATCC BAA-255 / R6).